The sequence spans 295 residues: Acetylglutamate kinase (295 aa).

Residues G66–G67, R88, and N193 contribute to the substrate site.

It belongs to the acetylglutamate kinase family. ArgB subfamily.

It localises to the cytoplasm. It carries out the reaction N-acetyl-L-glutamate + ATP = N-acetyl-L-glutamyl 5-phosphate + ADP. The protein operates within amino-acid biosynthesis; L-arginine biosynthesis; N(2)-acetyl-L-ornithine from L-glutamate: step 2/4. Its function is as follows. Catalyzes the ATP-dependent phosphorylation of N-acetyl-L-glutamate. This is Acetylglutamate kinase from Sinorhizobium fredii (strain NBRC 101917 / NGR234).